Consider the following 100-residue polypeptide: Urease subunit gamma (100 aa).

It belongs to the urease gamma subunit family. As to quaternary structure, heterotrimer of UreA (gamma), UreB (beta) and UreC (alpha) subunits. Three heterotrimers associate to form the active enzyme.

The protein resides in the cytoplasm. It carries out the reaction urea + 2 H2O + H(+) = hydrogencarbonate + 2 NH4(+). It participates in nitrogen metabolism; urea degradation; CO(2) and NH(3) from urea (urease route): step 1/1. The chain is Urease subunit gamma from Blochmanniella floridana.